Reading from the N-terminus, the 373-residue chain is GTP cyclohydrolase 1 type 2 homolog (373 aa).

Residues histidine 67, histidine 68, aspartate 106, histidine 333, and glutamate 336 each coordinate a divalent metal cation.

This sequence belongs to the GTP cyclohydrolase I type 2/NIF3 family. In terms of assembly, homohexamer.

The polypeptide is GTP cyclohydrolase 1 type 2 homolog (Listeria innocua serovar 6a (strain ATCC BAA-680 / CLIP 11262)).